Reading from the N-terminus, the 389-residue chain is Probable inactive purple acid phosphatase 29 (389 aa).

The N-terminal stretch at 1-34 (MADNRRRRSLFDFLLFSVFLGLACLCLSPIPATA) is a signal peptide. N-linked (GlcNAc...) asparagine glycosylation occurs at asparagine 80. Residue asparagine 136 coordinates substrate. Asparagine 136 contacts Zn(2+). N-linked (GlcNAc...) asparagine glycosylation is found at asparagine 191 and asparagine 267. Histidine 303 contacts Zn(2+). 303-305 (HDH) provides a ligand contact to substrate. Residue histidine 305 participates in Fe cation binding. Asparagine 380 is a glycosylation site (N-linked (GlcNAc...) asparagine).

The protein belongs to the metallophosphoesterase superfamily. Purple acid phosphatase family. Homodimer. It depends on Fe cation as a cofactor. Zn(2+) is required as a cofactor. In terms of tissue distribution, expressed in roots, stems, leaves, flowers and siliques.

It is found in the secreted. The sequence is that of Probable inactive purple acid phosphatase 29 (PAP29) from Arabidopsis thaliana (Mouse-ear cress).